The chain runs to 388 residues: 2-Hydroxyacid oxidase (388 aa).

The disordered stretch occupies residues 1–21; that stretch reads MENQFKNNNNSSSIETSNQFS. Residues 26–384 form the FMN hydroxy acid dehydrogenase domain; that stretch reads NRLDSFVSVS…NNSIIWDQNK (359 aa). A glyoxylate-binding site is contributed by Y52. FMN-binding positions include 105 to 107, S134, 156 to 158, and T184; these read PWA and QLY. Y158 is a binding site for glyoxylate. R193 contributes to the glyoxylate binding site. K255 and S277 together coordinate FMN. Positions 279 and 282 each coordinate glyoxylate. H279 acts as the Proton acceptor in catalysis. Residues 310 to 314 and 333 to 334 each bind FMN; these read DGGIR and GR.

It belongs to the FMN-dependent alpha-hydroxy acid dehydrogenase family. In terms of assembly, homotetramer. The cofactor is FMN.

The catalysed reaction is glycolate + O2 = glyoxylate + H2O2. It catalyses the reaction a (2S)-2-hydroxycarboxylate + O2 = a 2-oxocarboxylate + H2O2. In terms of biological role, catalyzes the oxidation of glycolate to glyoxylate, with a reduction of O2 to H2O2. May use other 2-hydroxyacids as substrates. The polypeptide is 2-Hydroxyacid oxidase (haox) (Dictyostelium discoideum (Social amoeba)).